Consider the following 264-residue polypeptide: Tritrans,polycis-undecaprenyl-diphosphate synthase (geranylgeranyl-diphosphate specific) (264 aa).

D43 is an active-site residue. A Mg(2+)-binding site is contributed by D43. Substrate is bound by residues G44–R47, W48, H60, and S88–E90. Catalysis depends on N91, which acts as the Proton acceptor. Substrate-binding positions include F92, R94, R213, and R219–S221. E232 lines the Mg(2+) pocket.

It belongs to the UPP synthase family. In terms of assembly, homodimer. Requires Mg(2+) as cofactor.

The catalysed reaction is geranylgeranyl diphosphate + 7 isopentenyl diphosphate = tri-trans,hepta-cis-undecaprenyl diphosphate + 7 diphosphate. Catalyzes the sequential condensation of isopentenyl diphosphate (IPP) with geranylgeranyl diphosphate (GGPP) to yield (2Z,6Z,10Z,14Z,18Z,22Z,26Z,30E,34E,38E)-undecaprenyl diphosphate (tritrans,heptacis-UPP). It is probably the precursor of glycosyl carrier lipids. The polypeptide is Tritrans,polycis-undecaprenyl-diphosphate synthase (geranylgeranyl-diphosphate specific) (Pyrococcus horikoshii (strain ATCC 700860 / DSM 12428 / JCM 9974 / NBRC 100139 / OT-3)).